Reading from the N-terminus, the 270-residue chain is Tryptophan synthase alpha chain (270 aa).

Catalysis depends on proton acceptor residues E49 and D60.

Belongs to the TrpA family. Tetramer of two alpha and two beta chains.

The enzyme catalyses (1S,2R)-1-C-(indol-3-yl)glycerol 3-phosphate + L-serine = D-glyceraldehyde 3-phosphate + L-tryptophan + H2O. The protein operates within amino-acid biosynthesis; L-tryptophan biosynthesis; L-tryptophan from chorismate: step 5/5. Its function is as follows. The alpha subunit is responsible for the aldol cleavage of indoleglycerol phosphate to indole and glyceraldehyde 3-phosphate. This chain is Tryptophan synthase alpha chain, found in Pseudomonas fluorescens (strain ATCC BAA-477 / NRRL B-23932 / Pf-5).